We begin with the raw amino-acid sequence, 147 residues long: Large ribosomal subunit protein uL13 (147 aa).

This sequence belongs to the universal ribosomal protein uL13 family. Part of the 50S ribosomal subunit.

Functionally, this protein is one of the early assembly proteins of the 50S ribosomal subunit, although it is not seen to bind rRNA by itself. It is important during the early stages of 50S assembly. The sequence is that of Large ribosomal subunit protein uL13 from Leuconostoc mesenteroides subsp. mesenteroides (strain ATCC 8293 / DSM 20343 / BCRC 11652 / CCM 1803 / JCM 6124 / NCDO 523 / NBRC 100496 / NCIMB 8023 / NCTC 12954 / NRRL B-1118 / 37Y).